Here is a 256-residue protein sequence, read N- to C-terminus: N-acetyl-D-glucosamine kinase (256 aa).

ATP contacts are provided by residues 4-11 and 133-140; these read GFDMGGTK and GVGGGLIV. Zn(2+) contacts are provided by His-157, Cys-177, Cys-179, and Cys-184.

This sequence belongs to the ROK (NagC/XylR) family. NagK subfamily.

The catalysed reaction is N-acetyl-D-glucosamine + ATP = N-acetyl-D-glucosamine 6-phosphate + ADP + H(+). The protein operates within cell wall biogenesis; peptidoglycan recycling. Functionally, catalyzes the phosphorylation of N-acetyl-D-glucosamine (GlcNAc) derived from cell-wall degradation, yielding GlcNAc-6-P. This chain is N-acetyl-D-glucosamine kinase (nagK), found in Yersinia pestis bv. Antiqua (strain Nepal516).